The chain runs to 561 residues: Putative transport protein YbjL (561 aa).

The next 5 membrane-spanning stretches (helical) occupy residues 8 to 28 (LLNG…LCLG), 32 to 52 (LGSV…LLGQ), 66 to 86 (FMLF…SIFF), 94 to 114 (MLAL…GKLF), and 158 to 178 (NLSL…IVGA). 2 consecutive RCK C-terminal domains span residues 200–288 (RGLD…SFRN) and 292–373 (VFDR…RIGF). Helical transmembrane passes span 383 to 403 (LLAF…TFQF), 406 to 426 (FSFG…LGFL), 447 to 467 (FGLM…ISNG), 475 to 495 (MLIA…LFGA), and 540 to 560 (AIAN…WPGL).

It belongs to the AAE transporter (TC 2.A.81) family. YbjL subfamily.

The protein localises to the cell membrane. This is Putative transport protein YbjL from Salmonella agona (strain SL483).